The chain runs to 162 residues: Ribosome-binding factor A (162 aa).

Positions 124–162 (ARVRSGAKPAGEADPYRESGSGVEPGRDGSIGDDDQPEY) are disordered.

This sequence belongs to the RbfA family. Monomer. Binds 30S ribosomal subunits, but not 50S ribosomal subunits or 70S ribosomes.

The protein localises to the cytoplasm. Functionally, one of several proteins that assist in the late maturation steps of the functional core of the 30S ribosomal subunit. Associates with free 30S ribosomal subunits (but not with 30S subunits that are part of 70S ribosomes or polysomes). Required for efficient processing of 16S rRNA. May interact with the 5'-terminal helix region of 16S rRNA. The sequence is that of Ribosome-binding factor A from Mycolicibacterium paratuberculosis (strain ATCC BAA-968 / K-10) (Mycobacterium paratuberculosis).